Consider the following 194-residue polypeptide: GTP cyclohydrolase-2 (194 aa).

47 to 51 (RVHSE) provides a ligand contact to GTP. The Zn(2+) site is built by Cys52, Cys63, and Cys65. GTP is bound by residues Gln68, 90-92 (EGR), and Thr112. Asp124 functions as the Proton acceptor in the catalytic mechanism. Catalysis depends on Arg126, which acts as the Nucleophile. Positions 147 and 152 each coordinate GTP.

Belongs to the GTP cyclohydrolase II family. As to quaternary structure, homodimer. Requires Zn(2+) as cofactor.

It carries out the reaction GTP + 4 H2O = 2,5-diamino-6-hydroxy-4-(5-phosphoribosylamino)-pyrimidine + formate + 2 phosphate + 3 H(+). The protein operates within cofactor biosynthesis; riboflavin biosynthesis; 5-amino-6-(D-ribitylamino)uracil from GTP: step 1/4. In terms of biological role, catalyzes the conversion of GTP to 2,5-diamino-6-ribosylamino-4(3H)-pyrimidinone 5'-phosphate (DARP), formate and pyrophosphate. This chain is GTP cyclohydrolase-2, found in Buchnera aphidicola subsp. Acyrthosiphon pisum (strain APS) (Acyrthosiphon pisum symbiotic bacterium).